Consider the following 252-residue polypeptide: Chitooligosaccharide deacetylase (252 aa).

Positions 61 and 125 each coordinate Mg(2+).

It belongs to the YdjC deacetylase family. ChbG subfamily. In terms of assembly, homodimer. Mg(2+) serves as cofactor.

It is found in the cytoplasm. The catalysed reaction is N,N'-diacetylchitobiose + H2O = N-acetyl-beta-D-glucosaminyl-(1-&gt;4)-D-glucosamine + acetate. It catalyses the reaction diacetylchitobiose-6'-phosphate + H2O = N'-monoacetylchitobiose-6'-phosphate + acetate. It participates in glycan degradation; chitin degradation. Involved in the degradation of chitin. ChbG is essential for growth on the acetylated chitooligosaccharides chitobiose and chitotriose but is dispensable for growth on cellobiose and chitosan dimer, the deacetylated form of chitobiose. Deacetylation of chitobiose-6-P and chitotriose-6-P is necessary for both the activation of the chb promoter by the regulatory protein ChbR and the hydrolysis of phosphorylated beta-glucosides by the phospho-beta-glucosidase ChbF. Catalyzes the removal of only one acetyl group from chitobiose-6-P to yield monoacetylchitobiose-6-P, the inducer of ChbR and the substrate of ChbF. The chain is Chitooligosaccharide deacetylase from Escherichia coli O6:K15:H31 (strain 536 / UPEC).